A 266-amino-acid polypeptide reads, in one-letter code: Putative pyruvate, phosphate dikinase regulatory protein (266 aa).

149-156 (GVSRTSKT) contacts ADP.

It belongs to the pyruvate, phosphate/water dikinase regulatory protein family. PDRP subfamily.

It carries out the reaction N(tele)-phospho-L-histidyl/L-threonyl-[pyruvate, phosphate dikinase] + ADP = N(tele)-phospho-L-histidyl/O-phospho-L-threonyl-[pyruvate, phosphate dikinase] + AMP + H(+). The catalysed reaction is N(tele)-phospho-L-histidyl/O-phospho-L-threonyl-[pyruvate, phosphate dikinase] + phosphate + H(+) = N(tele)-phospho-L-histidyl/L-threonyl-[pyruvate, phosphate dikinase] + diphosphate. Its function is as follows. Bifunctional serine/threonine kinase and phosphorylase involved in the regulation of the pyruvate, phosphate dikinase (PPDK) by catalyzing its phosphorylation/dephosphorylation. This is Putative pyruvate, phosphate dikinase regulatory protein from Halothermothrix orenii (strain H 168 / OCM 544 / DSM 9562).